Consider the following 495-residue polypeptide: Glycerol kinase (495 aa).

Residue Thr-13 participates in ADP binding. Positions 13, 14, and 15 each coordinate ATP. Thr-13 is a binding site for sn-glycerol 3-phosphate. An ADP-binding site is contributed by Arg-17. Sn-glycerol 3-phosphate contacts are provided by Arg-83, Glu-84, Tyr-135, and Asp-244. Glycerol is bound by residues Arg-83, Glu-84, Tyr-135, Asp-244, and Gln-245. Residues Thr-266 and Gly-309 each coordinate ADP. ATP-binding residues include Thr-266, Gly-309, Gln-313, and Gly-410. Residues Gly-410 and Asn-414 each coordinate ADP.

This sequence belongs to the FGGY kinase family.

It carries out the reaction glycerol + ATP = sn-glycerol 3-phosphate + ADP + H(+). Its pathway is polyol metabolism; glycerol degradation via glycerol kinase pathway; sn-glycerol 3-phosphate from glycerol: step 1/1. Inhibited by fructose 1,6-bisphosphate (FBP). Key enzyme in the regulation of glycerol uptake and metabolism. Catalyzes the phosphorylation of glycerol to yield sn-glycerol 3-phosphate. The chain is Glycerol kinase from Shewanella amazonensis (strain ATCC BAA-1098 / SB2B).